Here is a 270-residue protein sequence, read N- to C-terminus: MSLKKSPFFELRSGSVDTLLFIVKTADLDALRAELVKRFEATPEFFADDVVAIDVRRLAGHERVPLDDIRGMLNDVRMRAIGVVAQPEQHAWAASAGLPLLEARDRRAPSSKAADEAPVQQAEPAAPAAGQAALFEQAGPTLADAGAPPESPAPAVAAQSATLVVDRPLRSGQQIYAKGDLVVLGPVSYGAEVIAEGNIHIYAPLRGRALAGVHGNHDARIFCTCLEPELISIAGIYRTTENPLPADVLGKSVQIRLEQEKLMIEPLRLT.

Positions 105–129 (DRRAPSSKAADEAPVQQAEPAAPAA) are disordered. The segment covering 116–129 (EAPVQQAEPAAPAA) has biased composition (low complexity).

This sequence belongs to the MinC family. In terms of assembly, interacts with MinD and FtsZ.

In terms of biological role, cell division inhibitor that blocks the formation of polar Z ring septums. Rapidly oscillates between the poles of the cell to destabilize FtsZ filaments that have formed before they mature into polar Z rings. Prevents FtsZ polymerization. The chain is Probable septum site-determining protein MinC from Burkholderia pseudomallei (strain 668).